A 308-amino-acid polypeptide reads, in one-letter code: tRNA dimethylallyltransferase (308 aa).

14 to 21 (GPTASGKT) serves as a coordination point for ATP. Residue 16–21 (TASGKT) participates in substrate binding. 3 interaction with substrate tRNA regions span residues 39–42 (DSAL), 163–167 (QRLSR), and 244–249 (RCVGYR).

Belongs to the IPP transferase family. As to quaternary structure, monomer. Requires Mg(2+) as cofactor.

The enzyme catalyses adenosine(37) in tRNA + dimethylallyl diphosphate = N(6)-dimethylallyladenosine(37) in tRNA + diphosphate. In terms of biological role, catalyzes the transfer of a dimethylallyl group onto the adenine at position 37 in tRNAs that read codons beginning with uridine, leading to the formation of N6-(dimethylallyl)adenosine (i(6)A). This chain is tRNA dimethylallyltransferase, found in Shewanella loihica (strain ATCC BAA-1088 / PV-4).